Consider the following 622-residue polypeptide: Phosphomethylpyrimidine synthase (622 aa).

Residues Asn226, Met255, Tyr284, His320, 340–342 (SRG), 381–384 (DGLR), and Glu420 each bind substrate. A Zn(2+)-binding site is contributed by His424. Substrate is bound at residue Tyr447. A Zn(2+)-binding site is contributed by His488. Cys568, Cys571, and Cys576 together coordinate [4Fe-4S] cluster.

The protein belongs to the ThiC family. In terms of assembly, homodimer. Requires [4Fe-4S] cluster as cofactor.

It catalyses the reaction 5-amino-1-(5-phospho-beta-D-ribosyl)imidazole + S-adenosyl-L-methionine = 4-amino-2-methyl-5-(phosphooxymethyl)pyrimidine + CO + 5'-deoxyadenosine + formate + L-methionine + 3 H(+). The protein operates within cofactor biosynthesis; thiamine diphosphate biosynthesis. Functionally, catalyzes the synthesis of the hydroxymethylpyrimidine phosphate (HMP-P) moiety of thiamine from aminoimidazole ribotide (AIR) in a radical S-adenosyl-L-methionine (SAM)-dependent reaction. The chain is Phosphomethylpyrimidine synthase from Ruthia magnifica subsp. Calyptogena magnifica.